A 345-amino-acid polypeptide reads, in one-letter code: Probable dual-specificity RNA methyltransferase RlmN (345 aa).

Glu-93 functions as the Proton acceptor in the catalytic mechanism. Residues 99–326 (DDERATLCIS…TTIRASRGED (228 aa)) form the Radical SAM core domain. A disulfide bond links Cys-106 and Cys-331. The [4Fe-4S] cluster site is built by Cys-113, Cys-117, and Cys-120. S-adenosyl-L-methionine contacts are provided by residues 158–159 (GE), Ser-190, 212–214 (SLH), and His-288. The S-methylcysteine intermediate role is filled by Cys-331.

Belongs to the radical SAM superfamily. RlmN family. Requires [4Fe-4S] cluster as cofactor.

The protein localises to the cytoplasm. It carries out the reaction adenosine(2503) in 23S rRNA + 2 reduced [2Fe-2S]-[ferredoxin] + 2 S-adenosyl-L-methionine = 2-methyladenosine(2503) in 23S rRNA + 5'-deoxyadenosine + L-methionine + 2 oxidized [2Fe-2S]-[ferredoxin] + S-adenosyl-L-homocysteine. The enzyme catalyses adenosine(37) in tRNA + 2 reduced [2Fe-2S]-[ferredoxin] + 2 S-adenosyl-L-methionine = 2-methyladenosine(37) in tRNA + 5'-deoxyadenosine + L-methionine + 2 oxidized [2Fe-2S]-[ferredoxin] + S-adenosyl-L-homocysteine. Its function is as follows. Specifically methylates position 2 of adenine 2503 in 23S rRNA and position 2 of adenine 37 in tRNAs. This chain is Probable dual-specificity RNA methyltransferase RlmN, found in Bacteroides thetaiotaomicron (strain ATCC 29148 / DSM 2079 / JCM 5827 / CCUG 10774 / NCTC 10582 / VPI-5482 / E50).